An 863-amino-acid polypeptide reads, in one-letter code: Leucine-rich repeat and death domain-containing protein 1 (863 aa).

2 disordered regions span residues 1–37 and 51–100; these read MSEKEGMSEELEDTISQFRKESRSQSVKEPGFIKETS and SSNQ…SQSL. Positions 88 to 100 are enriched in low complexity; it reads SETSTRTETSQSL. LRR repeat units lie at residues 143–166, 167–189, 190–213, 214–236, 238–259, 260–282, 284–305, 306–328, 329–351, 353–374, 375–397, 398–420, 422–443, 445–466, 468–489, 490–513, 515–535, 536–558, 560–581, 582–604, 606–627, 630–653, 654–676, 678–699, 700–722, and 724–745; these read CKDNFTVNLEAKGLQEFPKDILKI, KYVKHLYLDKNQIKTFQGADSGD, LLGLEILSLQENGLSSLPSEIQLL, HNLRILNVSHNHISHIPKEISQL, NIRQLFFYNNYIENFPSDLECL, GNLEILSLGKNKLRHIPDTLPSL, YLRVLNLEYNQLTIFPKALCFL, PKLISLDLTGNLISSLPKEIREL, KNLETLLLDHNKLTFLAVEIFQL, KIKELQLADNKLEVISHKIENF, RELRILILDKNLLKNIPEKICCC, AMLECLTLSDNKLTELPKNIHKL, NLRKLHVNRNNMVKITDSISHL, NICSLEFSGNIIAGIPIEIKNC, KIIKIELNYNKIMYFPLGLCAL, DSLYYLSVNGNYISEIPADISFSK, LLHLELSENKLLIFSEHFCSL, INLKYLDLGKNQIKKIPASISNM, SLHVLILCCNKFETFPRELCTL, ENLRVLDLSENQLQKISSDICNL, RIQKLNFSSNQFIHFPIELCQL, LEQLNISQIKGRKLTRLPGELSNM, TQLKELDISNNAIREIPRNIGEL, NLVSLHAYNNQISYIPPSLLSL, NDLQQLNLSGNNLTALPSAIYNL, and SLKEINFDDNPLLRPPMEICKG. The region spanning 767–855 is the Death domain; the sequence is EKIFKIVANN…EIMDKITALN (89 aa). An LRR 27 repeat occupies 856 to 863; that stretch reads LFTRAIKF.

This is Leucine-rich repeat and death domain-containing protein 1 (LRRD1) from Macaca fascicularis (Crab-eating macaque).